A 271-amino-acid polypeptide reads, in one-letter code: Type III pantothenate kinase (271 aa).

6–13 is an ATP binding site; that stretch reads DVRNTHTV. Substrate is bound at residue 109 to 112; the sequence is GADR. The Proton acceptor role is filled by Asp111. Asp131 lines the K(+) pocket. Ser134 is an ATP binding site. Thr186 lines the substrate pocket.

Belongs to the type III pantothenate kinase family. In terms of assembly, homodimer. It depends on NH4(+) as a cofactor. K(+) serves as cofactor.

Its subcellular location is the cytoplasm. It catalyses the reaction (R)-pantothenate + ATP = (R)-4'-phosphopantothenate + ADP + H(+). It functions in the pathway cofactor biosynthesis; coenzyme A biosynthesis; CoA from (R)-pantothenate: step 1/5. Functionally, catalyzes the phosphorylation of pantothenate (Pan), the first step in CoA biosynthesis. This Mycobacterium avium (strain 104) protein is Type III pantothenate kinase.